The primary structure comprises 451 residues: Tubulin beta-1 chain (451 aa).

The short motif at 1 to 4 (MREI) is the MREI motif element. GTP-binding residues include glutamine 11, glutamate 69, serine 138, glycine 142, threonine 143, and glycine 144. Glutamate 69 contributes to the Mg(2+) binding site. Phosphoserine; by CDK1 is present on serine 172. 2 residues coordinate GTP: asparagine 204 and asparagine 226. The tract at residues 430 to 451 (AGLEDSEEDVEEAEVEAEDKDH) is disordered. The span at 433-451 (EDSEEDVEEAEVEAEDKDH) shows a compositional bias: acidic residues. Serine 435 is subject to Phosphoserine. At glutamate 440 the chain carries 5-glutamyl polyglutamate.

The protein belongs to the tubulin family. As to quaternary structure, dimer of alpha and beta chains. A typical microtubule is a hollow water-filled tube with an outer diameter of 25 nm and an inner diameter of 15 nM. Alpha-beta heterodimers associate head-to-tail to form protofilaments running lengthwise along the microtubule wall with the beta-tubulin subunit facing the microtubule plus end conferring a structural polarity. Microtubules usually have 13 protofilaments but different protofilament numbers can be found in some organisms and specialized cells. Interacts with RANBP10. The cofactor is Mg(2+). Some glutamate residues at the C-terminus are polyglycylated, resulting in polyglycine chains on the gamma-carboxyl group. Glycylation is mainly limited to tubulin incorporated into axonemes (cilia and flagella) whereas glutamylation is prevalent in neuronal cells, centrioles, axonemes, and the mitotic spindle. Both modifications can coexist on the same protein on adjacent residues, and lowering polyglycylation levels increases polyglutamylation, and reciprocally. Cilia and flagella glycylation is required for their stability and maintenance. Flagella glycylation controls sperm motility. In terms of processing, some glutamate residues at the C-terminus are polyglutamylated, resulting in polyglutamate chains on the gamma-carboxyl group. Polyglutamylation plays a key role in microtubule severing by spastin (SPAST). SPAST preferentially recognizes and acts on microtubules decorated with short polyglutamate tails: severing activity by SPAST increases as the number of glutamates per tubulin rises from one to eight, but decreases beyond this glutamylation threshold. Glutamylation is also involved in cilia motility. Post-translationally, phosphorylated on Ser-172 by CDK1 during the cell cycle, from metaphase to telophase, but not in interphase. This phosphorylation inhibits tubulin incorporation into microtubules.

It localises to the cytoplasm. The protein resides in the cytoskeleton. In terms of biological role, tubulin is the major constituent of microtubules, a cylinder consisting of laterally associated linear protofilaments composed of alpha- and beta-tubulin heterodimers. Microtubules grow by the addition of GTP-tubulin dimers to the microtubule end, where a stabilizing cap forms. Below the cap, tubulin dimers are in GDP-bound state, owing to GTPase activity of alpha-tubulin. This is Tubulin beta-1 chain (Tubb1) from Mus musculus (Mouse).